The sequence spans 317 residues: Melanocyte-stimulating hormone receptor (317 aa).

Topologically, residues 1–37 (MPMQEPQRRLLDPFNSTRTGTPHLKLSANQTGPWCLH) are extracellular. N15 and N29 each carry an N-linked (GlcNAc...) asparagine glycan. A helical transmembrane segment spans residues 38–63 (VSIPDGLFLSLGLVSLVENVLVVISI). Topologically, residues 64–72 (AKNRNLHSP) are cytoplasmic. A helical transmembrane segment spans residues 73–93 (MYYFICCLALSDLLVSVSIVL). Topologically, residues 94-118 (ETTLILVLEAGALATRVTVVQQLDN) are extracellular. Residues 119–140 (VIDVLICGSMVSSLCFLGAIAV) form a helical membrane-spanning segment. At 141–163 (DRYISIFYALRYHSIVTLPRARW) the chain is on the cytoplasmic side. A helical transmembrane segment spans residues 164–183 (AIVAIWVASISSSTLFVAYY). Topologically, residues 184–191 (NHTAVLLC) are extracellular. A helical membrane pass occupies residues 192–211 (LVTFFLATLALMAVLYVHML). Residues 212–240 (ARAHQHAQAIAQLHKRQHLVHQGFRLKGA) are Cytoplasmic-facing. A helical transmembrane segment spans residues 241–266 (ATLTILLGIFFLCWGPFFLYLTLIVL). The Extracellular portion of the chain corresponds to 267–279 (CPKHPTCSCFFKN). A helical transmembrane segment spans residues 280–300 (LNLFLALIIFNSIVDPLIYAF). Topologically, residues 301 to 317 (RSQELRMTLKEVLLCSW) are cytoplasmic. C315 carries the S-palmitoyl cysteine lipid modification.

It belongs to the G-protein coupled receptor 1 family. In terms of assembly, interacts with MGRN1, but does not undergo MGRN1-mediated ubiquitination; this interaction competes with GNAS-binding and thus inhibits agonist-induced cAMP production. Interacts with OPN3; the interaction results in a decrease in MC1R-mediated cAMP signaling and ultimately a decrease in melanin production in melanocytes.

It localises to the cell membrane. Functionally, receptor for MSH (alpha, beta and gamma) and ACTH. The activity of this receptor is mediated by G proteins which activate adenylate cyclase. Mediates melanogenesis, the production of eumelanin (black/brown) and phaeomelanin (red/yellow), via regulation of cAMP signaling in melanocytes. The chain is Melanocyte-stimulating hormone receptor (MC1R) from Chaetodipus baileyi (Bailey's pocket mouse).